The primary structure comprises 124 residues: Fluoride-specific ion channel FluC (124 aa).

4 consecutive transmembrane segments (helical) span residues 1 to 21 (MIALIAAVSAGGIAGTLLRFA), 37 to 57 (GTLAVNLVGCLLIGLLYGLFL), 69 to 89 (GLIVGFLGGLTTFSSFSLDTV), and 99 to 119 (LALGYTSISVVGGLLATWAGL). Positions 76 and 79 each coordinate Na(+).

Belongs to the fluoride channel Fluc/FEX (TC 1.A.43) family.

Its subcellular location is the cell inner membrane. The enzyme catalyses fluoride(in) = fluoride(out). Its activity is regulated as follows. Na(+) is not transported, but it plays an essential structural role and its presence is essential for fluoride channel function. Fluoride-specific ion channel. Important for reducing fluoride concentration in the cell, thus reducing its toxicity. This chain is Fluoride-specific ion channel FluC, found in Pseudomonas putida (strain ATCC 700007 / DSM 6899 / JCM 31910 / BCRC 17059 / LMG 24140 / F1).